Consider the following 320-residue polypeptide: Glucokinase (320 aa).

The protein belongs to the ROK (NagC/XylR) family. As to quaternary structure, monomer. A divalent metal cation serves as cofactor.

The catalysed reaction is D-glucose + ATP = D-glucose 6-phosphate + ADP + H(+). In terms of biological role, catalyzes the phosphorylation of D-glucose to D-glucose 6-phosphate using ATP as the phosphate donor. ITP can also serve as an effective phosphoryl donor. According to Hansen et al., the enzyme has a broad hexose specificity, and in addition to glucose, which shows the highest catalytic efficiency, it can also phosphorylate fructose, mannose, glucosamine, N-acetylglucosamine, N-acetylmannosamine and 2-deoxyglucose. However, according to Sakuraba et al., the enzyme shows strict specificity for D-glucose. The protein is Glucokinase of Aeropyrum pernix (strain ATCC 700893 / DSM 11879 / JCM 9820 / NBRC 100138 / K1).